The following is a 629-amino-acid chain: tRNA uridine 5-carboxymethylaminomethyl modification enzyme MnmG (629 aa).

FAD is bound by residues 13–18 (GGGHAG), valine 125, and serine 180. 273–287 (GPRYCPSIEDKVMRF) serves as a coordination point for NAD(+). Position 370 (glutamine 370) interacts with FAD.

This sequence belongs to the MnmG family. As to quaternary structure, homodimer. Heterotetramer of two MnmE and two MnmG subunits. It depends on FAD as a cofactor.

It localises to the cytoplasm. NAD-binding protein involved in the addition of a carboxymethylaminomethyl (cmnm) group at the wobble position (U34) of certain tRNAs, forming tRNA-cmnm(5)s(2)U34. This chain is tRNA uridine 5-carboxymethylaminomethyl modification enzyme MnmG, found in Escherichia coli O127:H6 (strain E2348/69 / EPEC).